The chain runs to 338 residues: Fructose-1,6-bisphosphatase class 1 (338 aa).

Glu92, Asp115, Leu117, and Asp118 together coordinate Mg(2+). Substrate is bound by residues 118–121 (DGSS), Asn211, Tyr244, 262–264 (YLY), and Lys274. Position 280 (Glu280) interacts with Mg(2+).

This sequence belongs to the FBPase class 1 family. As to quaternary structure, homotetramer. Mg(2+) serves as cofactor.

The protein localises to the cytoplasm. It catalyses the reaction beta-D-fructose 1,6-bisphosphate + H2O = beta-D-fructose 6-phosphate + phosphate. It participates in carbohydrate biosynthesis; gluconeogenesis. The chain is Fructose-1,6-bisphosphatase class 1 from Vibrio parahaemolyticus serotype O3:K6 (strain RIMD 2210633).